A 451-amino-acid chain; its full sequence is Phosphoglucosamine mutase (451 aa).

Serine 102 (phosphoserine intermediate) is an active-site residue. Residues serine 102, aspartate 244, aspartate 246, and aspartate 248 each contribute to the Mg(2+) site. Phosphoserine is present on serine 102.

Belongs to the phosphohexose mutase family. Requires Mg(2+) as cofactor. Activated by phosphorylation.

It catalyses the reaction alpha-D-glucosamine 1-phosphate = D-glucosamine 6-phosphate. In terms of biological role, catalyzes the conversion of glucosamine-6-phosphate to glucosamine-1-phosphate. The sequence is that of Phosphoglucosamine mutase from Lawsonia intracellularis (strain PHE/MN1-00).